Here is a 434-residue protein sequence, read N- to C-terminus: UPF0597 protein CLI_2075 (434 aa).

This sequence belongs to the UPF0597 family.

The polypeptide is UPF0597 protein CLI_2075 (Clostridium botulinum (strain Langeland / NCTC 10281 / Type F)).